A 254-amino-acid polypeptide reads, in one-letter code: Triosephosphate isomerase (254 aa).

Asparagine 9 to lysine 11 is a binding site for substrate. Catalysis depends on histidine 96, which acts as the Electrophile. The active-site Proton acceptor is glutamate 168. Substrate is bound by residues glycine 174 and serine 213.

It belongs to the triosephosphate isomerase family. In terms of assembly, homodimer.

It localises to the cytoplasm. It carries out the reaction D-glyceraldehyde 3-phosphate = dihydroxyacetone phosphate. The protein operates within carbohydrate biosynthesis; gluconeogenesis. Its pathway is carbohydrate degradation; glycolysis; D-glyceraldehyde 3-phosphate from glycerone phosphate: step 1/1. In terms of biological role, involved in the gluconeogenesis. Catalyzes stereospecifically the conversion of dihydroxyacetone phosphate (DHAP) to D-glyceraldehyde-3-phosphate (G3P). In Buchnera aphidicola subsp. Schizaphis graminum (strain Sg), this protein is Triosephosphate isomerase.